We begin with the raw amino-acid sequence, 512 residues long: 2,3-bisphosphoglycerate-independent phosphoglycerate mutase (512 aa).

Residues Asp18 and Ser68 each contribute to the Mn(2+) site. Ser68 functions as the Phosphoserine intermediate in the catalytic mechanism. Residues His129, 159–160 (RD), Arg191, Arg197, 265–268 (RPDR), and Lys338 contribute to the substrate site. Mn(2+)-binding residues include Asp403, His407, Asp444, His445, and His462.

It belongs to the BPG-independent phosphoglycerate mutase family. Monomer. It depends on Mn(2+) as a cofactor.

It carries out the reaction (2R)-2-phosphoglycerate = (2R)-3-phosphoglycerate. Its pathway is carbohydrate degradation; glycolysis; pyruvate from D-glyceraldehyde 3-phosphate: step 3/5. Catalyzes the interconversion of 2-phosphoglycerate and 3-phosphoglycerate. The chain is 2,3-bisphosphoglycerate-independent phosphoglycerate mutase from Mesomycoplasma hyopneumoniae (strain 232) (Mycoplasma hyopneumoniae).